The following is a 1005-amino-acid chain: Defense-associated sirtuin 2 (1005 aa).

Positions 1–295 are SIR2; that stretch reads MVKVDLESKR…YSAVMDLLIE (295 aa). Residues 56 to 111 are inter-dimer interaction; sequence YPQWWRLVDKYHEELYGSPKKGNYSSDEYLRIPQIFYNVKGEMAFDGILKDFFQVD. Active-site residues include Tyr134, Asp135, and His171. The segment at 296–548 is MID; the sequence is SQENKFITKD…YKILEFLSDN (253 aa). The tract at residues 549 to 1005 is CTD; the sequence is QFLYDDTVKL…YLEILMNYFI (457 aa).

Homotetramer (dimer of dimers). Homodimer. The SIR2 domains are arranged in a central core, adopting a head-to-head arrangement, while the CTDs are positioned at the periphery of the complex. Tetramerization is necessary for the activation of NADase activity. The NADase enzymatic activity of this homotetrameric form is autoinhibited. The activated form of DSR2 (after binding to the phage tube protein) exists as tetramers and dimers, with the tetramers exhibiting more NADase activity. Each tetramer binds 4 NAD(+) molecules. In terms of assembly, (Microbial infection) Interacts (via C-terminus) with phage SPR tail tube monomer protein (via N-terminus) in a 4:4 DSR2-Tube assembly; this interaction induces a conformation change of the tube protein and activates the NADase activity of DSR2. As to quaternary structure, (Microbial infection) Interacts (via C-terminus) with phage SPbeta DSAD1 in a 4:2 ratio; this interaction prevents activation of the NADase defense activity of DSR2.

The catalysed reaction is NAD(+) + H2O = ADP-D-ribose + nicotinamide + H(+). With respect to regulation, (Microbial infection) NADase activity is activated through the binding of SPR phage tail tube monomer protein. NADase activity is inhibited through the binding to the phage SPbeta DSR anti-defense 1 (DSAD1). Its function is as follows. Anti-phage defense protein that is activated through the binding to the phage tail tube protein monomer and which hydrolyzes NAD+ upon activation (NADase activity). The resulting depletion of NAD(+) leads to an abortive infection. The chain is Defense-associated sirtuin 2 from Bacillus subtilis.